Reading from the N-terminus, the 228-residue chain is Small ribosomal subunit protein uS3 (228 aa).

The KH type-2 domain maps to 39–107 (IRKELNEKLK…PVNINIEEIK (69 aa)).

This sequence belongs to the universal ribosomal protein uS3 family. As to quaternary structure, part of the 30S ribosomal subunit. Forms a tight complex with proteins S10 and S14.

Binds the lower part of the 30S subunit head. Binds mRNA in the 70S ribosome, positioning it for translation. This Hydrogenovibrio crunogenus (strain DSM 25203 / XCL-2) (Thiomicrospira crunogena) protein is Small ribosomal subunit protein uS3.